We begin with the raw amino-acid sequence, 523 residues long: MDSSYSFALGTSSSILPKLSFRNVENRFYGEKNNNNGLCKRFGSDLGSKKFRNQKFKHGVVYAVATSDNPKKAMTVKTSMFERRKVDPQNVAAIILGGGNGAKLFPLTMRAATPAVPVGGCYRLIDIPMSNCINSCINKIFVLTQFNSASLNRHLARTYFGNGINFGGGFVEVLAATQTPGEAGKKWFQGTADAVRKFLWVFEDAKNRNIENILILSGDHLYRMNYMDFVQSHVDSNADITLSCAPVSESRASNFGLVKIDRGGRVIHFSEKPTGVDLKSMQTDTTMLGLSHQEATDSPYIASMGVYCFKTEALLNLLTRQYPSSNDFGSEVIPAAIRDHDVQGYIFRDYWEDIGTIKTFYEANLALVEERPKFEFYDPETPFYTSPRFLPPTKAEKCRMVDSIISHGCFLRECSVQRSIIGERSRLDYGVELQDTLMLGADYYQTESEIASLLAEGKVPIGIGKDTKIRKCIIDKNAKIGKNVIIMNKGDVQEADRPEEGFYIRSGITVIVEKATIQDGTVI.

The protein belongs to the bacterial/plant glucose-1-phosphate adenylyltransferase family. Heterotetramer.

The protein resides in the plastid. It localises to the chloroplast. The catalysed reaction is alpha-D-glucose 1-phosphate + ATP + H(+) = ADP-alpha-D-glucose + diphosphate. It participates in glycan biosynthesis; starch biosynthesis. Its activity is regulated as follows. Activated by 3'phosphoglycerate, inhibited by orthophosphate. Allosteric regulation. Its function is as follows. This protein plays a role in synthesis of starch. It catalyzes the synthesis of the activated glycosyl donor, ADP-glucose from Glc-1-P and ATP. This Arabidopsis thaliana (Mouse-ear cress) protein is Probable glucose-1-phosphate adenylyltransferase large subunit, chloroplastic.